The chain runs to 259 residues: UPF0246 protein VSAL_I2547 (259 aa).

This sequence belongs to the UPF0246 family.

The polypeptide is UPF0246 protein VSAL_I2547 (Aliivibrio salmonicida (strain LFI1238) (Vibrio salmonicida (strain LFI1238))).